A 292-amino-acid chain; its full sequence is Cytidine deaminase (292 aa).

2 consecutive CMP/dCMP-type deaminase domains span residues 47-167 (TPLK…FGPK) and 186-292 (DHQD…YYSL). 88–90 (NQE) serves as a coordination point for substrate. His-101 is a binding site for Zn(2+). Catalysis depends on Glu-103, which acts as the Proton donor. Zn(2+) contacts are provided by Cys-128 and Cys-131.

Belongs to the cytidine and deoxycytidylate deaminase family. As to quaternary structure, homodimer. Zn(2+) serves as cofactor.

It carries out the reaction cytidine + H2O + H(+) = uridine + NH4(+). The catalysed reaction is 2'-deoxycytidine + H2O + H(+) = 2'-deoxyuridine + NH4(+). In terms of biological role, this enzyme scavenges exogenous and endogenous cytidine and 2'-deoxycytidine for UMP synthesis. The sequence is that of Cytidine deaminase from Haemophilus influenzae (strain 86-028NP).